We begin with the raw amino-acid sequence, 798 residues long: Penicillin-binding protein 1A (798 aa).

At 1 to 9 (MIKKIVTTC) the chain is on the cytoplasmic side. Residues 10–30 (FGLVLGLCVFGVGLVAIAILV) traverse the membrane as a helical; Signal-anchor for type II membrane protein segment. Residues 31–798 (TYPKLPSLDS…SKQPQLDSLF (768 aa)) are Periplasmic-facing. A transglycosylase region spans residues 50-218 (LTIYSADGEV…SAYNPIVNPE (169 aa)). Glu88 (proton donor; for transglycosylase activity) is an active-site residue. Residues 414–700 (VVVQEPLLQA…GTIAVPVWVD (287 aa)) are transpeptidase. The active-site Acyl-ester intermediate; for transpeptidase activity is the Ser461. The interval 751 to 798 (SRRIREDKEAGAEDVERGAADEVRQEVQETPVLPSNTGSKQPQLDSLF) is disordered. The segment covering 753-777 (RIREDKEAGAEDVERGAADEVRQEV) has biased composition (basic and acidic residues). The span at 783 to 798 (LPSNTGSKQPQLDSLF) shows a compositional bias: polar residues.

In the N-terminal section; belongs to the glycosyltransferase 51 family. This sequence in the C-terminal section; belongs to the transpeptidase family.

Its subcellular location is the cell inner membrane. The catalysed reaction is [GlcNAc-(1-&gt;4)-Mur2Ac(oyl-L-Ala-gamma-D-Glu-L-Lys-D-Ala-D-Ala)](n)-di-trans,octa-cis-undecaprenyl diphosphate + beta-D-GlcNAc-(1-&gt;4)-Mur2Ac(oyl-L-Ala-gamma-D-Glu-L-Lys-D-Ala-D-Ala)-di-trans,octa-cis-undecaprenyl diphosphate = [GlcNAc-(1-&gt;4)-Mur2Ac(oyl-L-Ala-gamma-D-Glu-L-Lys-D-Ala-D-Ala)](n+1)-di-trans,octa-cis-undecaprenyl diphosphate + di-trans,octa-cis-undecaprenyl diphosphate + H(+). It catalyses the reaction Preferential cleavage: (Ac)2-L-Lys-D-Ala-|-D-Ala. Also transpeptidation of peptidyl-alanyl moieties that are N-acyl substituents of D-alanine.. Its pathway is cell wall biogenesis; peptidoglycan biosynthesis. In terms of biological role, cell wall formation. Synthesis of cross-linked peptidoglycan from the lipid intermediates. The enzyme has a penicillin-insensitive transglycosylase N-terminal domain (formation of linear glycan strands) and a penicillin-sensitive transpeptidase C-terminal domain (cross-linking of the peptide subunits). The chain is Penicillin-binding protein 1A (mrcA) from Neisseria cinerea.